The primary structure comprises 159 residues: Ribosomal RNA large subunit methyltransferase H (159 aa).

S-adenosyl-L-methionine-binding positions include L76, G108, and 127-132 (FSRMTF).

The protein belongs to the RNA methyltransferase RlmH family. In terms of assembly, homodimer.

The protein resides in the cytoplasm. It catalyses the reaction pseudouridine(1915) in 23S rRNA + S-adenosyl-L-methionine = N(3)-methylpseudouridine(1915) in 23S rRNA + S-adenosyl-L-homocysteine + H(+). In terms of biological role, specifically methylates the pseudouridine at position 1915 (m3Psi1915) in 23S rRNA. The chain is Ribosomal RNA large subunit methyltransferase H from Bacillus pumilus (strain SAFR-032).